The following is a 336-amino-acid chain: Anthranilate phosphoribosyltransferase (336 aa).

5-phospho-alpha-D-ribose 1-diphosphate contacts are provided by residues G79, 82 to 83 (GD), T87, 89 to 92 (NIST), 107 to 115 (KHGNRAMSS), and S119. An anthranilate-binding site is contributed by G79. S91 provides a ligand contact to Mg(2+). N110 contacts anthranilate. R165 is a binding site for anthranilate. Residues D225 and E226 each coordinate Mg(2+).

This sequence belongs to the anthranilate phosphoribosyltransferase family. In terms of assembly, homodimer. It depends on Mg(2+) as a cofactor.

It carries out the reaction N-(5-phospho-beta-D-ribosyl)anthranilate + diphosphate = 5-phospho-alpha-D-ribose 1-diphosphate + anthranilate. It functions in the pathway amino-acid biosynthesis; L-tryptophan biosynthesis; L-tryptophan from chorismate: step 2/5. Functionally, catalyzes the transfer of the phosphoribosyl group of 5-phosphorylribose-1-pyrophosphate (PRPP) to anthranilate to yield N-(5'-phosphoribosyl)-anthranilate (PRA). The polypeptide is Anthranilate phosphoribosyltransferase (Dictyoglomus turgidum (strain DSM 6724 / Z-1310)).